The chain runs to 584 residues: Leucine-rich repeat and fibronectin type III domain-containing protein 1 (584 aa).

Residues 1–17 (MERLVFCVLVFGALAKA) form the signal peptide. The 34-residue stretch at 18-51 (QLCPGRCICQTISPTLTLLCAKTGLLFVPPTVDR) folds into the LRRNT domain. The Extracellular segment spans residues 18 to 494 (QLCPGRCICQ…VPSQFLGGTM (477 aa)). LRR repeat units follow at residues 52–73 (KTVELRLTDNFITAVRRKDFLN), 76–97 (SLVHLTLSRNTISQIAPHAFMG), 100–121 (SLRALHMDGNRLSVINSDQLKG), 124–145 (NLRHLILGNNQIHHIEESSFDE), 149–170 (TIEDLDLSYNNLRTLPWEAIAR), 173–194 (NINTLTLDHNLIDHIGVGTFTL), and 197–218 (KLVRLDMTSNRLQTLPPDTLFQ). N73 is a glycosylation site (N-linked (GlcNAc...) asparagine). Residues 241–287 (NPLHCNCELLWLRRLTREDDLETCASPEHLMDKYFWSIQEEEFICEP) enclose the LRRCT domain. In terms of domain architecture, Ig-like spans 288-375 (PLITKHQVTK…GIATAAVHVH (88 aa)). C310 and C359 are disulfide-bonded. N-linked (GlcNAc...) asparagine glycosylation is found at N332, N341, N384, N408, and N421. The interval 393–414 (DPGLSDISTSSRSSSNDSKTHS) is disordered. Low complexity predominate over residues 397–409 (SDISTSSRSSSND). Residues 495-515 (IIIIGGIIVASVLVFIIILMI) traverse the membrane as a helical segment. Residues 516 to 584 (RYKAYSGGGG…MVLPILHLLF (69 aa)) lie on the Cytoplasmic side of the membrane. Residues 539-564 (HVHSQTNGSRSAATKQSEEPPESPAG) are disordered. The segment covering 540–553 (VHSQTNGSRSAATK) has biased composition (polar residues).

Belongs to the LRFN family.

It is found in the membrane. It localises to the synapse. In terms of biological role, involved in the regulation of excitatory synapses. The polypeptide is Leucine-rich repeat and fibronectin type III domain-containing protein 1 (lrfn1) (Danio rerio (Zebrafish)).